Here is a 148-residue protein sequence, read N- to C-terminus: UPF0260 protein Spro_2751 (148 aa).

This sequence belongs to the UPF0260 family.

The sequence is that of UPF0260 protein Spro_2751 from Serratia proteamaculans (strain 568).